The chain runs to 174 residues: Transcriptional repressor NrdR (174 aa).

A zinc finger spans residues 3–34 (CPFCQHNDTRVIDSRVSEDGTTIRRRRECEAC). In terms of domain architecture, ATP-cone spans 49 to 139 (PTVVKSDGGR…VYRSFQDVAD (91 aa)).

The protein belongs to the NrdR family. Zn(2+) serves as cofactor.

Functionally, negatively regulates transcription of bacterial ribonucleotide reductase nrd genes and operons by binding to NrdR-boxes. The chain is Transcriptional repressor NrdR from Xanthomonas axonopodis pv. citri (strain 306).